The sequence spans 263 residues: Probable ABC transporter permease protein ycf63 (263 aa).

6 helical membrane passes run 43-63 (LVGPGSLNITLLTACFISMVF), 82-102 (AVIVIAFTRELSPVLTAVIIA), 136-156 (LVFPKVAACCIMLPILSTISL), 159-179 (SIAISIFVSFVMYGIPSSIFL), 199-219 (LCFGTIIAFISCQWGLTSSGG), and 230-250 (SVVTILLTIFITDFILSYFMF).

Belongs to the MlaE permease family.

The protein resides in the plastid. It is found in the chloroplast membrane. Could be part of an ABC transporter complex. This is Probable ABC transporter permease protein ycf63 (ycf63) from Porphyra purpurea (Red seaweed).